A 393-amino-acid polypeptide reads, in one-letter code: Lipid-A-disaccharide synthase (393 aa).

Belongs to the LpxB family.

The enzyme catalyses a lipid X + a UDP-2-N,3-O-bis[(3R)-3-hydroxyacyl]-alpha-D-glucosamine = a lipid A disaccharide + UDP + H(+). Its pathway is bacterial outer membrane biogenesis; LPS lipid A biosynthesis. Condensation of UDP-2,3-diacylglucosamine and 2,3-diacylglucosamine-1-phosphate to form lipid A disaccharide, a precursor of lipid A, a phosphorylated glycolipid that anchors the lipopolysaccharide to the outer membrane of the cell. This chain is Lipid-A-disaccharide synthase, found in Actinobacillus pleuropneumoniae serotype 3 (strain JL03).